The primary structure comprises 512 residues: Reduced folate transporter (512 aa).

Met1 carries the post-translational modification N-acetylmethionine. Residues 1 to 29 (MVPTGQVAEKQACEEPRQDRELKSWRWLV) lie on the Cytoplasmic side of the membrane. Residues 30-50 (FYLCFFGFMAQLRPGESFITP) form a helical membrane-spanning segment. Folate contacts are provided by Ile48 and Thr49. The Extracellular portion of the chain corresponds to 51–62 (YLLERNFTKEQV). N-linked (GlcNAc...) asparagine glycosylation is present at Asn56. The helical transmembrane segment at 63–85 (TNEIIPMLPYSHLAVLVPIFLLT) threads the bilayer. The Cytoplasmic segment spans residues 86-89 (DYLR). The helical transmembrane segment at 90–110 (YKPVLVLQCLSFVCVWLLLLL) threads the bilayer. Over 111-114 (GTSV) the chain is Extracellular. Residues 115 to 137 (VHMQLMEVFYSITMAARIAYSSY) form a helical membrane-spanning segment. Folate contacts are provided by Glu121 and Arg131. Topologically, residues 138 to 151 (IFSLVQPSRYQRMA) are cytoplasmic. A helical transmembrane segment spans residues 152 to 176 (SYSRAAVLLGVFISSVLGQVLVTLG). Val162 is a binding site for folate. The Extracellular portion of the chain corresponds to 177 to 181 (GISTY). A helical membrane pass occupies residues 182–200 (MLNCISLGFILFSLSLSLF). Residues 201-266 (LKRPKRSLFF…ELVKNVRQPQ (66 aa)) are Cytoplasmic-facing. A helical membrane pass occupies residues 267 to 292 (LRLWCLWWVFNSAGYYLITYYVHVLW). Folate contacts are provided by Tyr281, Tyr282, and Tyr286. At 293–300 (KITDSRLN) the chain is on the extracellular side. A helical membrane pass occupies residues 301 to 323 (YNGAVDAASTLLSAITAFTAGFV). The Cytoplasmic segment spans residues 324-329 (NIRWAL). A helical transmembrane segment spans residues 330–350 (WSKLVIASVIAIQAGLVFCMF). Residues 351 to 353 (QIP) lie on the Extracellular side of the membrane. A helical transmembrane segment spans residues 354 to 377 (DIWVCYVTFVLFRGAYQFLVPIAT). The folate site is built by Arg366 and Gln370. The Cytoplasmic portion of the chain corresponds to 378 to 391 (FQIASSLSKELCAL). A helical membrane pass occupies residues 392 to 415 (VFGINTFLATALKTSITLVVSDKR). The tract at residues 400–412 (ATALKTSITLVVS) is required for substrate-binding. Over 416–423 (GLGLQVHQ) the chain is Extracellular. A helical membrane pass occupies residues 424–448 (QFRIYFMYFLTLSIICLAWAGLDGL). Topologically, residues 449–512 (RYYRRGRHQP…RADLRVEAKA (64 aa)) are cytoplasmic. 3 positions are modified to phosphoserine: Ser466, Ser471, and Ser476. The interval 479 to 512 (DGDLRRPQPSAPQLLPEDGSVEDGRADLRVEAKA) is disordered. Over residues 500 to 512 (EDGRADLRVEAKA) the composition is skewed to basic and acidic residues.

Belongs to the reduced folate carrier (RFC) transporter (TC 2.A.48) family. In terms of tissue distribution, expressed in liver, heart, brain, spleen, lung and skeletal muscle.

It localises to the cell membrane. The protein resides in the apical cell membrane. Its subcellular location is the basolateral cell membrane. It carries out the reaction 5-amino-1-(5-phospho-beta-D-ribosyl)imidazole-4-carboxamide(in) + (6S)-5-methyl-5,6,7,8-tetrahydrofolate(out) = 5-amino-1-(5-phospho-beta-D-ribosyl)imidazole-4-carboxamide(out) + (6S)-5-methyl-5,6,7,8-tetrahydrofolate(in). Functionally, antiporter that mediates the import of reduced folates, driven by the export of organic anions. Also acts as an importer of immunoreactive cyclic dinucleotides, but with a lower transporter activity. Mechanistically, acts as a secondary active transporter, which exports intracellular organic anions down their concentration gradients to facilitate the uptake of its substrates. Has high affinity for N5-methyltetrahydrofolate, the predominant circulating form of folate. Also mediates the import of antifolate drug methotrexate. 5-amino-4-imidazolecarboxamide riboside (AICAR), when phosphorylated to AICAR monophosphate, can serve as an organic anion for antiporter activity. This is Reduced folate transporter from Rattus norvegicus (Rat).